The following is an 87-amino-acid chain: UPF0250 protein YE3006 (87 aa).

This sequence belongs to the UPF0250 family.

The sequence is that of UPF0250 protein YE3006 from Yersinia enterocolitica serotype O:8 / biotype 1B (strain NCTC 13174 / 8081).